The sequence spans 281 residues: 4-diphosphocytidyl-2-C-methyl-D-erythritol kinase (281 aa).

Lys-15 is an active-site residue. ATP is bound at residue 98 to 108 (PTGAGLGGGSS). Asp-140 is a catalytic residue.

This sequence belongs to the GHMP kinase family. IspE subfamily.

It carries out the reaction 4-CDP-2-C-methyl-D-erythritol + ATP = 4-CDP-2-C-methyl-D-erythritol 2-phosphate + ADP + H(+). It functions in the pathway isoprenoid biosynthesis; isopentenyl diphosphate biosynthesis via DXP pathway; isopentenyl diphosphate from 1-deoxy-D-xylulose 5-phosphate: step 3/6. Its function is as follows. Catalyzes the phosphorylation of the position 2 hydroxy group of 4-diphosphocytidyl-2C-methyl-D-erythritol. This is 4-diphosphocytidyl-2-C-methyl-D-erythritol kinase from Neisseria gonorrhoeae (strain ATCC 700825 / FA 1090).